Consider the following 195-residue polypeptide: ATP-dependent Clp protease proteolytic subunit (195 aa).

Residue S101 is the Nucleophile of the active site. The active site involves H126.

Belongs to the peptidase S14 family. Component of the chloroplastic Clp protease core complex.

Its subcellular location is the plastid. It is found in the chloroplast stroma. It catalyses the reaction Hydrolysis of proteins to small peptides in the presence of ATP and magnesium. alpha-casein is the usual test substrate. In the absence of ATP, only oligopeptides shorter than five residues are hydrolyzed (such as succinyl-Leu-Tyr-|-NHMec, and Leu-Tyr-Leu-|-Tyr-Trp, in which cleavage of the -Tyr-|-Leu- and -Tyr-|-Trp bonds also occurs).. Cleaves peptides in various proteins in a process that requires ATP hydrolysis. Has a chymotrypsin-like activity. Plays a major role in the degradation of misfolded proteins. The sequence is that of ATP-dependent Clp protease proteolytic subunit from Oltmannsiellopsis viridis (Marine flagellate).